The primary structure comprises 383 residues: Cyclin-D4-2 (383 aa).

Over residues 51-62 (AAGGGGGSGGGG) the composition is skewed to gly residues. 3 disordered regions span residues 51–70 (AAGGGGGSGGGGVEEEEDMF), 313–335 (QPKPASTRRGSASASSSSVPESP), and 354–383 (ATIASHGGGRRKSCFDSSPVTSKKRRKLSR). The segment covering 323–335 (SASASSSSVPESP) has biased composition (low complexity).

The protein belongs to the cyclin family. Cyclin D subfamily.

This is Cyclin-D4-2 (CYCD4-2) from Oryza sativa subsp. japonica (Rice).